A 225-amino-acid polypeptide reads, in one-letter code: Futalosine hydrolase (225 aa).

It belongs to the PNP/UDP phosphorylase family. Futalosine hydrolase subfamily. As to quaternary structure, homotetramer.

It catalyses the reaction futalosine + H2O = dehypoxanthine futalosine + hypoxanthine. It participates in quinol/quinone metabolism; menaquinone biosynthesis. No enhancing of inhibitory effects are observed with divalent metal ions. Slightly inhibited by hypoxanthine. Its function is as follows. Catalyzes the hydrolysis of futalosine (FL) to dehypoxanthine futalosine (DHFL) and hypoxanthine, a step in the biosynthesis of menaquinone (MK, vitamin K2). Is highly specific to futalosine since it does not accept aminodeoxyfutalosine (AFL), or any structurally related nucleotides and nucleosides as substrate. The protein is Futalosine hydrolase of Thermus thermophilus (strain ATCC 27634 / DSM 579 / HB8).